The following is a 302-amino-acid chain: Sulfate adenylyltransferase subunit 2 (302 aa).

This sequence belongs to the PAPS reductase family. CysD subfamily. In terms of assembly, heterodimer composed of CysD, the smaller subunit, and CysN.

The enzyme catalyses sulfate + ATP + H(+) = adenosine 5'-phosphosulfate + diphosphate. It participates in sulfur metabolism; hydrogen sulfide biosynthesis; sulfite from sulfate: step 1/3. In terms of biological role, with CysN forms the ATP sulfurylase (ATPS) that catalyzes the adenylation of sulfate producing adenosine 5'-phosphosulfate (APS) and diphosphate, the first enzymatic step in sulfur assimilation pathway. APS synthesis involves the formation of a high-energy phosphoric-sulfuric acid anhydride bond driven by GTP hydrolysis by CysN coupled to ATP hydrolysis by CysD. This chain is Sulfate adenylyltransferase subunit 2, found in Xanthomonas euvesicatoria pv. vesicatoria (strain 85-10) (Xanthomonas campestris pv. vesicatoria).